Reading from the N-terminus, the 100-residue chain is MHLSPQEKDKLLIVTAALLAERRLNRGLKLNHPEAVAWLSFLVLEGARDGKSVAELMQEGTTWLRQDQVMEGVPELVHEVQMEAVFPDGTKLVTLHDPIR.

It belongs to the urease gamma subunit family. As to quaternary structure, heterotrimer of UreA (gamma), UreB (beta) and UreC (alpha) subunits. Three heterotrimers associate to form the active enzyme.

It localises to the cytoplasm. The catalysed reaction is urea + 2 H2O + H(+) = hydrogencarbonate + 2 NH4(+). It functions in the pathway nitrogen metabolism; urea degradation; CO(2) and NH(3) from urea (urease route): step 1/1. The sequence is that of Urease subunit gamma from Synechococcus sp. (strain CC9605).